The primary structure comprises 206 residues: Small ribosomal subunit protein uS4 (206 aa).

The S4 RNA-binding domain occupies 96–156; the sequence is GRLDNVVYRM…EKAKKQSRVK (61 aa).

Belongs to the universal ribosomal protein uS4 family. As to quaternary structure, part of the 30S ribosomal subunit. Contacts protein S5. The interaction surface between S4 and S5 is involved in control of translational fidelity.

Functionally, one of the primary rRNA binding proteins, it binds directly to 16S rRNA where it nucleates assembly of the body of the 30S subunit. With S5 and S12 plays an important role in translational accuracy. In Erwinia tasmaniensis (strain DSM 17950 / CFBP 7177 / CIP 109463 / NCPPB 4357 / Et1/99), this protein is Small ribosomal subunit protein uS4.